The following is a 130-amino-acid chain: uncharacterized protein (130 aa).

Met1 is subject to N-acetylmethionine.

Homotetramer.

This is an uncharacterized protein from Arabidopsis thaliana (Mouse-ear cress).